Here is a 202-residue protein sequence, read N- to C-terminus: Large ribosomal subunit protein uL4 (202 aa).

The disordered stretch occupies residues 45–71; the sequence is HAQKNRSEVSGSGKKPWRQKGTGRARV.

Belongs to the universal ribosomal protein uL4 family. As to quaternary structure, part of the 50S ribosomal subunit.

One of the primary rRNA binding proteins, this protein initially binds near the 5'-end of the 23S rRNA. It is important during the early stages of 50S assembly. It makes multiple contacts with different domains of the 23S rRNA in the assembled 50S subunit and ribosome. Its function is as follows. Forms part of the polypeptide exit tunnel. This Buchnera aphidicola subsp. Baizongia pistaciae (strain Bp) protein is Large ribosomal subunit protein uL4.